A 510-amino-acid polypeptide reads, in one-letter code: Maturase K (510 aa).

The protein belongs to the intron maturase 2 family. MatK subfamily.

The protein localises to the plastid. Its subcellular location is the chloroplast. Usually encoded in the trnK tRNA gene intron. Probably assists in splicing its own and other chloroplast group II introns. This is Maturase K from Spirodela intermedia (Intermediate duckweed).